Here is a 131-residue protein sequence, read N- to C-terminus: Putative gamma-taxilin 2 (131 aa).

Belongs to the taxilin family. As to expression, ubiquitously expressed.

This is Putative gamma-taxilin 2 (TXLNGY) from Homo sapiens (Human).